A 133-amino-acid polypeptide reads, in one-letter code: Global transcriptional regulator Spx (133 aa).

The cysteines at positions 10 and 13 are disulfide-linked.

This sequence belongs to the ArsC family. Spx subfamily. In terms of assembly, interacts with the C-terminal domain of the alpha subunit of the RNAP.

Its subcellular location is the cytoplasm. In terms of biological role, global transcriptional regulator that plays a key role in stress response and exerts either positive or negative regulation of genes. Acts by interacting with the C-terminal domain of the alpha subunit of the RNA polymerase (RNAP). This interaction can enhance binding of RNAP to the promoter region of target genes and stimulate their transcription, or block interaction of RNAP with activator. The polypeptide is Global transcriptional regulator Spx (Streptococcus pneumoniae serotype 4 (strain ATCC BAA-334 / TIGR4)).